A 457-amino-acid chain; its full sequence is Exodeoxyribonuclease 7 large subunit (457 aa).

It belongs to the XseA family. As to quaternary structure, heterooligomer composed of large and small subunits.

It localises to the cytoplasm. It carries out the reaction Exonucleolytic cleavage in either 5'- to 3'- or 3'- to 5'-direction to yield nucleoside 5'-phosphates.. Bidirectionally degrades single-stranded DNA into large acid-insoluble oligonucleotides, which are then degraded further into small acid-soluble oligonucleotides. In Enterobacter sp. (strain 638), this protein is Exodeoxyribonuclease 7 large subunit.